Consider the following 122-residue polypeptide: Large ribosomal subunit protein uL14c (122 aa).

This sequence belongs to the universal ribosomal protein uL14 family. As to quaternary structure, part of the 50S ribosomal subunit.

It is found in the plastid. It localises to the chloroplast. In terms of biological role, binds to 23S rRNA. The polypeptide is Large ribosomal subunit protein uL14c (Pinus koraiensis (Korean pine)).